The primary structure comprises 32 residues: U5-ctenitoxin-Pn1a (32 aa).

Cystine bridges form between C3/C16, C9/C21, and C15/C30.

Expressed by the venom gland.

It localises to the secreted. Functionally, blocks voltage-gated sodium channels (Nav). Causes tail erection, scratching and a reduction in mobility at a dose level of 1.40 mg/mouse. In Phoneutria nigriventer (Brazilian armed spider), this protein is U5-ctenitoxin-Pn1a.